The sequence spans 327 residues: Glycolipid sulfotransferase BCG_1434 (327 aa).

40–45 is a 3'-phosphoadenylyl sulfate binding site; sequence KSGLTW. Histidine 97 serves as the catalytic Proton acceptor. Residue 116–124 participates in 3'-phosphoadenylyl sulfate binding; it reads RDPRDAAVS.

The protein belongs to the sulfotransferase 1 family.

In terms of biological role, involved in the synthesis of cell wall sulfolipids. The protein is Glycolipid sulfotransferase BCG_1434 of Mycobacterium bovis (strain BCG / Pasteur 1173P2).